The following is a 226-amino-acid chain: Isoprenyl transferase (226 aa).

Aspartate 12 is a catalytic residue. Residue aspartate 12 coordinates Mg(2+). Residues 13-16 (GNAR), tryptophan 17, lysine 25, histidine 29, and 57-59 (SSE) each bind substrate. Asparagine 60 (proton acceptor) is an active-site residue. Substrate is bound by residues tryptophan 61, arginine 63, arginine 174, and 180–182 (RIS). Residue glutamate 193 participates in Mg(2+) binding.

Belongs to the UPP synthase family. As to quaternary structure, homodimer. The cofactor is Mg(2+).

Its function is as follows. Catalyzes the condensation of isopentenyl diphosphate (IPP) with allylic pyrophosphates generating different type of terpenoids. This chain is Isoprenyl transferase, found in Rickettsia bellii (strain RML369-C).